The sequence spans 149 residues: Nucleoside diphosphate kinase (149 aa).

ATP-binding residues include K9, F57, R85, T91, R102, and N112. H115 serves as the catalytic Pros-phosphohistidine intermediate.

The protein belongs to the NDK family. Mg(2+) serves as cofactor.

The protein localises to the cytoplasm. The enzyme catalyses a 2'-deoxyribonucleoside 5'-diphosphate + ATP = a 2'-deoxyribonucleoside 5'-triphosphate + ADP. It carries out the reaction a ribonucleoside 5'-diphosphate + ATP = a ribonucleoside 5'-triphosphate + ADP. Major role in the synthesis of nucleoside triphosphates other than ATP. The ATP gamma phosphate is transferred to the NDP beta phosphate via a ping-pong mechanism, using a phosphorylated active-site intermediate. In Methanosarcina mazei (strain ATCC BAA-159 / DSM 3647 / Goe1 / Go1 / JCM 11833 / OCM 88) (Methanosarcina frisia), this protein is Nucleoside diphosphate kinase.